The primary structure comprises 155 residues: Transcriptional repressor NrdR (155 aa).

The segment at 3–34 is a zinc-finger region; sequence CPYCGHLEDRVVDSRETQDGQATRRRRACLSC. Residues 49 to 139 form the ATP-cone domain; sequence PQVVKKDGRR…VYRAFRDVGE (91 aa).

Belongs to the NrdR family. It depends on Zn(2+) as a cofactor.

Its function is as follows. Negatively regulates transcription of bacterial ribonucleotide reductase nrd genes and operons by binding to NrdR-boxes. The sequence is that of Transcriptional repressor NrdR from Anaeromyxobacter sp. (strain K).